Consider the following 386-residue polypeptide: Protein phosphatase methylesterase 1 (386 aa).

The interval 20-48 (ILEKLKGGQEPNSNEEGSDSIGDLPSLKN) is disordered. Residues Ser-194, Asp-222, and His-348 contribute to the active site.

Belongs to the AB hydrolase superfamily.

It carries out the reaction [phosphatase 2A protein]-C-terminal L-leucine methyl ester + H2O = [phosphatase 2A protein]-C-terminal L-leucine + methanol + H(+). Its function is as follows. Demethylates proteins that have been reversibly carboxymethylated. Demethylates the phosphatase PP2A catalytic subunit. The polypeptide is Protein phosphatase methylesterase 1 (PPE1) (Candida glabrata (strain ATCC 2001 / BCRC 20586 / JCM 3761 / NBRC 0622 / NRRL Y-65 / CBS 138) (Yeast)).